We begin with the raw amino-acid sequence, 122 residues long: Large ribosomal subunit protein bL12 (122 aa).

This sequence belongs to the bacterial ribosomal protein bL12 family. Homodimer. Part of the ribosomal stalk of the 50S ribosomal subunit. Forms a multimeric L10(L12)X complex, where L10 forms an elongated spine to which 2 to 4 L12 dimers bind in a sequential fashion. Binds GTP-bound translation factors.

Its function is as follows. Forms part of the ribosomal stalk which helps the ribosome interact with GTP-bound translation factors. Is thus essential for accurate translation. The sequence is that of Large ribosomal subunit protein bL12 from Shewanella denitrificans (strain OS217 / ATCC BAA-1090 / DSM 15013).